The sequence spans 475 residues: Putative aldehyde dehydrogenase SH0913 (475 aa).

201 to 207 (GDGEGVG) is a binding site for NAD(+). Catalysis depends on residues E245 and C279.

Belongs to the aldehyde dehydrogenase family.

It catalyses the reaction an aldehyde + NAD(+) + H2O = a carboxylate + NADH + 2 H(+). The sequence is that of Putative aldehyde dehydrogenase SH0913 from Staphylococcus haemolyticus (strain JCSC1435).